A 375-amino-acid chain; its full sequence is MEFDVVVVGAGPAGSVAAWAAAEAGCDVLILERKAEIGVPKQCAEGISARALEEVGIRPDDGWIAAEIERGILSLPSGSKFEVEVEGYVLERRVFDKWLVVRAVEAGAEVELLAHARRALLDEGRVVGVEYEGEDGVHEVRARIVIAADGIESRIGRTAGLVPQLEPDHICTCAQYEVVGDRYDPKAFMIHFDPERIPGGYAWVFPKGENRANVGVGIRGSESSPGLALKTLDELVEGPLSELVAGTPVEVNVGGVPVCGPVERTYGDGILLVGDAARQVNPLTGGGLNTALICGRIAGEVAVEAIEEDDTSASFLKRYQDRWEEEFRDTFECAREVAEMLPELDLKEVVEFLSSVENLEEMLRTSGILEDVWWG.

Residues A13, E32, C43, A44, G46, R92, A116, D275, G287, and L288 each contribute to the FAD site. G367 contributes to the a 2,3-bis-O-(geranylgeranyl)-sn-glycerol 1-phospholipid binding site.

This sequence belongs to the geranylgeranyl reductase family. DGGGPL reductase subfamily. Requires FAD as cofactor.

It carries out the reaction a 2,3-bis-O-phytanyl-sn-glycerol 1-phospholipid + 8 A = a 2,3-bis-O-(geranylgeranyl)-sn-glycerol 1-phospholipid + 8 AH2. It catalyses the reaction 2,3-bis-O-(phytanyl)-sn-glycerol 1-phosphate + 8 A = 2,3-bis-O-(geranylgeranyl)-sn-glycerol 1-phosphate + 8 AH2. The enzyme catalyses CDP-2,3-bis-O-(geranylgeranyl)-sn-glycerol + 8 AH2 = CDP-2,3-bis-O-(phytanyl)-sn-glycerol + 8 A. The catalysed reaction is archaetidylserine + 8 AH2 = 2,3-bis-O-phytanyl-sn-glycero-3-phospho-L-serine + 8 A. Its pathway is membrane lipid metabolism; glycerophospholipid metabolism. Is involved in the reduction of 2,3-digeranylgeranylglycerophospholipids (unsaturated archaeols) into 2,3-diphytanylglycerophospholipids (saturated archaeols) in the biosynthesis of archaeal membrane lipids. Catalyzes the formation of archaetidic acid (2,3-di-O-phytanyl-sn-glyceryl phosphate) from 2,3-di-O-geranylgeranylglyceryl phosphate (DGGGP) via the hydrogenation of each double bond of the isoprenoid chains. Is also probably able to reduce double bonds of geranyl groups in CDP-2,3-bis-O-(geranylgeranyl)-sn-glycerol and archaetidylserine, thus acting at various stages in the biosynthesis of archaeal membrane lipids. This chain is Digeranylgeranylglycerophospholipid reductase 1, found in Methanopyrus kandleri (strain AV19 / DSM 6324 / JCM 9639 / NBRC 100938).